The sequence spans 155 residues: Interleukin-2 (155 aa).

The signal sequence occupies residues 1–20; sequence MYKIQLLSCIALTLALVANG. Thr-23 is a glycosylation site (O-linked (GalNAc...) threonine). A disulfide bond links Cys-79 and Cys-127.

This sequence belongs to the IL-2 family.

It is found in the secreted. Functionally, cytokine produced by activated CD4-positive helper T-cells and to a lesser extend activated CD8-positive T-cells and natural killer (NK) cells that plays pivotal roles in the immune response and tolerance. Binds to a receptor complex composed of either the high-affinity trimeric IL-2R (IL2RA/CD25, IL2RB/CD122 and IL2RG/CD132) or the low-affinity dimeric IL-2R (IL2RB and IL2RG). Interaction with the receptor leads to oligomerization and conformation changes in the IL-2R subunits resulting in downstream signaling starting with phosphorylation of JAK1 and JAK3. In turn, JAK1 and JAK3 phosphorylate the receptor to form a docking site leading to the phosphorylation of several substrates including STAT5. This process leads to activation of several pathways including STAT, phosphoinositide-3-kinase/PI3K and mitogen-activated protein kinase/MAPK pathways. Functions as a T-cell growth factor and can increase NK-cell cytolytic activity as well. Promotes strong proliferation of activated B-cells and subsequently immunoglobulin production. Plays a pivotal role in regulating the adaptive immune system by controlling the survival and proliferation of regulatory T-cells, which are required for the maintenance of immune tolerance. Moreover, participates in the differentiation and homeostasis of effector T-cell subsets, including Th1, Th2, Th17 as well as memory CD8-positive T-cells. The polypeptide is Interleukin-2 (IL2) (Moschus berezovskii (Chinese forest musk deer)).